A 274-amino-acid polypeptide reads, in one-letter code: Pyrroline-5-carboxylate reductase 3 (274 aa).

The residue at position 2 (Ala2) is an N-acetylalanine.

This sequence belongs to the pyrroline-5-carboxylate reductase family. Homodecamer; composed of 5 homodimers.

The protein resides in the cytoplasm. The enzyme catalyses L-proline + NADP(+) = (S)-1-pyrroline-5-carboxylate + NADPH + 2 H(+). It carries out the reaction L-proline + NAD(+) = (S)-1-pyrroline-5-carboxylate + NADH + 2 H(+). It participates in amino-acid biosynthesis; L-proline biosynthesis; L-proline from L-glutamate 5-semialdehyde: step 1/1. Its function is as follows. Oxidoreductase that catalyzes the last step in proline biosynthesis, which corresponds to the reduction of pyrroline-5-carboxylate (P5C) to L-proline using NAD(P)H. Proline is synthesized from either glutamate or ornithine; both are converted to P5C, and then to proline via pyrroline-5-carboxylate reductases (PYCRs). PYCR3 is exclusively linked to the biosynthesis of proline from ornithine. This chain is Pyrroline-5-carboxylate reductase 3, found in Mus musculus (Mouse).